Reading from the N-terminus, the 274-residue chain is 2-dehydro-3-deoxyphosphooctonate aldolase (274 aa).

This sequence belongs to the KdsA family.

The protein resides in the cytoplasm. It carries out the reaction D-arabinose 5-phosphate + phosphoenolpyruvate + H2O = 3-deoxy-alpha-D-manno-2-octulosonate-8-phosphate + phosphate. It functions in the pathway carbohydrate biosynthesis; 3-deoxy-D-manno-octulosonate biosynthesis; 3-deoxy-D-manno-octulosonate from D-ribulose 5-phosphate: step 2/3. It participates in bacterial outer membrane biogenesis; lipopolysaccharide biosynthesis. The protein is 2-dehydro-3-deoxyphosphooctonate aldolase of Rickettsia conorii (strain ATCC VR-613 / Malish 7).